We begin with the raw amino-acid sequence, 191 residues long: Molybdenum cofactor guanylyltransferase (191 aa).

Residues 11-13 (LCG), Lys-23, Asp-66, and Asp-97 contribute to the GTP site. Asp-97 is a Mg(2+) binding site.

The protein belongs to the MobA family. In terms of assembly, monomer. Mg(2+) is required as a cofactor.

It is found in the cytoplasm. It carries out the reaction Mo-molybdopterin + GTP + H(+) = Mo-molybdopterin guanine dinucleotide + diphosphate. In terms of biological role, transfers a GMP moiety from GTP to Mo-molybdopterin (Mo-MPT) cofactor (Moco or molybdenum cofactor) to form Mo-molybdopterin guanine dinucleotide (Mo-MGD) cofactor. This chain is Molybdenum cofactor guanylyltransferase, found in Campylobacter jejuni subsp. jejuni serotype O:2 (strain ATCC 700819 / NCTC 11168).